The sequence spans 396 residues: Phosphoglycerate kinase (396 aa).

Substrate contacts are provided by residues aspartate 21 to asparagine 23, arginine 36, histidine 59 to lysine 62, arginine 119, and arginine 156. Residues lysine 206, glycine 294, glutamate 325, and glycine 352–serine 355 each bind ATP.

This sequence belongs to the phosphoglycerate kinase family. As to quaternary structure, monomer.

It is found in the cytoplasm. The catalysed reaction is (2R)-3-phosphoglycerate + ATP = (2R)-3-phospho-glyceroyl phosphate + ADP. The protein operates within carbohydrate degradation; glycolysis; pyruvate from D-glyceraldehyde 3-phosphate: step 2/5. This Staphylococcus aureus (strain bovine RF122 / ET3-1) protein is Phosphoglycerate kinase.